Here is a 215-residue protein sequence, read N- to C-terminus: Adenylate kinase (215 aa).

10–15 contributes to the ATP binding site; it reads GAGKGT. An NMP region spans residues 30 to 59; the sequence is STGDIFRKNISENTPLGMEARSYMDKGLLV. Residues Thr-31, Arg-36, 57-59, 85-88, and Gln-92 contribute to the AMP site; these read LLV and GFPR. The interval 126–163 is LID; it reads GRRVCTSCGGSFHIKFNPPTIDGKCNLCGSDIVQRKDD. Residue Arg-127 coordinates ATP. Cys-130 and Cys-133 together coordinate Zn(2+). ATP is bound at residue 136-137; the sequence is SF. Positions 150 and 153 each coordinate Zn(2+). The AMP site is built by Arg-160 and Arg-171. Lys-199 contributes to the ATP binding site.

It belongs to the adenylate kinase family. Monomer.

The protein resides in the cytoplasm. The enzyme catalyses AMP + ATP = 2 ADP. It participates in purine metabolism; AMP biosynthesis via salvage pathway; AMP from ADP: step 1/1. In terms of biological role, catalyzes the reversible transfer of the terminal phosphate group between ATP and AMP. Plays an important role in cellular energy homeostasis and in adenine nucleotide metabolism. This Clostridium botulinum (strain Alaska E43 / Type E3) protein is Adenylate kinase.